Consider the following 1135-residue polypeptide: DNA-directed RNA polymerase I subunit RPA2 (1135 aa).

Residues 1-26 (MDVDGRWRNLPSGPSLKHLTDPSYGI) form a disordered region. Arg180 lines the RNA pocket. Positions 194-208 (VRPKWKSRGLGYTQF) are loop B. Residues 236-247 (LNFIYRKELFFL) are loop A. Asp367 is an RNA binding site. Fork loop stretches follow at residues 439-453 (LRSK…DSGL) and 474-489 (RGAA…VRRL). Asp755 contacts Mg(2+). Residue Lys890 coordinates RNA. Residues Lys1020 and Arg1036 each contribute to the DNA site. Position 1051 is a phosphoserine (Ser1051). Residues Cys1070, Cys1073, Cys1098, and Cys1101 each coordinate Zn(2+). Residues 1070-1101 (CVECGSLLSPLLEKPPPSWSAMRNRKYNCTVC) form a C4-type zinc finger.

This sequence belongs to the RNA polymerase beta chain family. In terms of assembly, component of the RNA polymerase I (Pol I) complex consisting of 13 subunits: a ten-subunit catalytic core composed of POLR1A/RPA1, POLR1B/RPA2, POLR1C/RPAC1, POLR1D/RPAC2, POLR1H/RPA12, POLR2E/RPABC1, POLR2F/RPABC2, POLR2H/RPABC3, POLR2K/RPABC4 and POLR2L/RPABC5; a mobile stalk subunit POLR1F/RPA43 protruding from the core and additional subunits homologous to general transcription factors POLR1E/RPA49 and POLR1G/RPA34. Part of Pol I pre-initiation complex (PIC), in which Pol I core assembles with RRN3 and promoter-bound UTBF and SL1/TIF-IB complex. Mg(2+) is required as a cofactor.

Its subcellular location is the nucleus. The protein localises to the nucleolus. It localises to the chromosome. It carries out the reaction RNA(n) + a ribonucleoside 5'-triphosphate = RNA(n+1) + diphosphate. Functionally, catalytic core component of RNA polymerase I (Pol I), a DNA-dependent RNA polymerase which synthesizes ribosomal RNA precursors using the four ribonucleoside triphosphates as substrates. Transcribes 47S pre-rRNAs from multicopy rRNA gene clusters, giving rise to 5.8S, 18S and 28S ribosomal RNAs. Pol I-mediated transcription cycle proceeds through transcription initiation, transcription elongation and transcription termination stages. During transcription initiation, Pol I pre-initiation complex (PIC) is recruited by the selectivity factor 1 (SL1/TIF-IB) complex bound to the core promoter that precedes an rDNA repeat unit. The PIC assembly bends the promoter favoring the formation of the transcription bubble and promoter escape. Once the polymerase has escaped from the promoter it enters the elongation phase during which RNA is actively polymerized, based on complementarity with the template DNA strand. Highly processive, assembles in structures referred to as 'Miller trees' where many elongating Pol I complexes queue and transcribe the same rDNA coding regions. At terminator sequences downstream of the rDNA gene, PTRF interacts with Pol I and halts Pol I transcription leading to the release of the RNA transcript and polymerase from the DNA. Forms Pol I active center together with the largest subunit POLR1A/RPA1. Appends one nucleotide at a time to the 3' end of the nascent RNA, with POLR1A/RPA1 contributing a Mg(2+)-coordinating DxDGD motif, and POLR1B/RPA2 participating in the coordination of a second Mg(2+) ion and providing lysine residues believed to facilitate Watson-Crick base pairing between the incoming nucleotide and the template base. Typically, Mg(2+) ions direct a 5' nucleoside triphosphate to form a phosphodiester bond with the 3' hydroxyl of the preceding nucleotide of the nascent RNA, with the elimination of pyrophosphate. Has proofreading activity: Pauses and backtracks to allow the cleavage of a missincorporated nucleotide via POLR1H/RPA12. High Pol I processivity is associated with decreased transcription fidelity. This Mus musculus (Mouse) protein is DNA-directed RNA polymerase I subunit RPA2.